The following is a 423-amino-acid chain: Ribosome biogenesis protein WDR12 homolog (423 aa).

Positions valine 10–glutamate 93 are ubiquitin-like (UBL) domain. WD repeat units lie at residues leucine 105–isoleucine 142, glycine 144–glutamate 186, glycine 193–aspartate 232, glycine 253–glutamate 291, serine 293–valine 332, glycine 338–tyrosine 378, and glycine 382–methionine 420.

It belongs to the WD repeat WDR12/YTM1 family.

Its subcellular location is the nucleus. It localises to the nucleolus. The protein localises to the nucleoplasm. Its function is as follows. Required for maturation of ribosomal RNAs and formation of the large ribosomal subunit. The polypeptide is Ribosome biogenesis protein WDR12 homolog (Drosophila willistoni (Fruit fly)).